We begin with the raw amino-acid sequence, 251 residues long: Adenosylcobinamide-GDP ribazoletransferase (251 aa).

The next 6 membrane-spanning stretches (helical) occupy residues 36–56 (LYPFIGLIIGILWYLSFFVLS), 60–80 (VPIMLMAALILTVPYILTGFL), 110–130 (VGAFSVISVVLLLLVEFAGIF), 181–201 (EIILLGIYVLVALITFFTLGI), 202–222 (NYLIAILAMGLISFILLLKVK), and 231–251 (DVAGYILVLMEFTGILLLGII).

It belongs to the CobS family. Mg(2+) serves as cofactor.

It localises to the cell membrane. It catalyses the reaction alpha-ribazole + adenosylcob(III)inamide-GDP = adenosylcob(III)alamin + GMP + H(+). The enzyme catalyses alpha-ribazole 5'-phosphate + adenosylcob(III)inamide-GDP = adenosylcob(III)alamin 5'-phosphate + GMP + H(+). Its pathway is cofactor biosynthesis; adenosylcobalamin biosynthesis; adenosylcobalamin from cob(II)yrinate a,c-diamide: step 7/7. Functionally, joins adenosylcobinamide-GDP and alpha-ribazole to generate adenosylcobalamin (Ado-cobalamin). Also synthesizes adenosylcobalamin 5'-phosphate from adenosylcobinamide-GDP and alpha-ribazole 5'-phosphate. This is Adenosylcobinamide-GDP ribazoletransferase from Clostridium perfringens (strain SM101 / Type A).